The sequence spans 400 residues: Subtilisin-like protease 11 (400 aa).

The N-terminal stretch at 1–19 (MGLFKVIFTAVAALSAVDA) is a signal peptide. The propeptide occupies 20 to 117 (AELLSSAKSK…VEHDRHVYIS (98 aa)). The 82-residue stretch at 35–116 (SYLVVMKDSV…FVEHDRHVYI (82 aa)) folds into the Inhibitor I9 domain. Residues 127–400 (SWGLGRVSHR…NKLLYNRSGK (274 aa)) enclose the Peptidase S8 domain. N138 carries an N-linked (GlcNAc...) asparagine glycan. D159 acts as the Charge relay system in catalysis. An N-linked (GlcNAc...) asparagine glycan is attached at N181. H191 serves as the catalytic Charge relay system. N-linked (GlcNAc...) asparagine glycosylation is found at N252 and N337. Residue S346 is the Charge relay system of the active site. Residues N388 and N396 are each glycosylated (N-linked (GlcNAc...) asparagine).

The protein belongs to the peptidase S8 family.

Its subcellular location is the secreted. Secreted subtilisin-like serine protease with keratinolytic activity that contributes to pathogenicity. This chain is Subtilisin-like protease 11 (SUB11), found in Trichophyton verrucosum (strain HKI 0517).